The primary structure comprises 393 residues: Cytohesin-4 (393 aa).

The stretch at 13–56 (SGEAKELQQIKWHRKQLLEDIQKLKDEIADVFAQIDCFESTEES) forms a coiled coil. The SEC7 domain maps to 54–241 (EESRMAQKEK…RNLFDSIKSE (188 aa)). One can recognise a PH domain in the interval 259–375 (NPDREGWLLK…WIEAIRASIT (117 aa)). Residues 268 to 275 (KLGGRVKT), Arg-279, Tyr-290, and Arg-300 each bind a 1,2-diacyl-sn-glycero-3-phospho-(1D-myo-inositol-3,4,5-trisphosphate). The segment at 386-393 (RKKKIVGK) is C-terminal autoinhibitory region.

It is found in the cell membrane. Promotes guanine-nucleotide exchange on ARF1 and ARF5. Promotes the activation of ARF factors through replacement of GDP with GTP. In Mus musculus (Mouse), this protein is Cytohesin-4 (Cyth4).